The following is a 385-amino-acid chain: MAVFLSAGLGVLAPPETCPHPETSTSWESRLGTRFPSGSCTMSTEAQAMAEPTGQGPKNPRVSSVMVQLEMKPLWEEFNQLGTEMIVTKAGRRMFPTFQVKILGMDTLADYALLMDFIPLDDKRYRYAFHSSAWLVAGKADPATPGRVHFHPDSPAKGAQWMRQIVSFDKLKLTNNLMDDNGHIILNSMHRYQPRFHVVFVDPRKDSARYAQENFKSFVFTETQFTAVTAYQNHRITQLKIASNPFAKGFREADPDSWPVTPRPLLSIPARSRSSLSPCLLKGSAEREKDTSKASASSSRTPTQPHNQLLPAPDVLLAPATYRPLPYQNLYPGSPSRAGPPRARLAPYPLPNISTAGDQEDPTLAAGLGLLPTSALCLVSNQASQ.

The T-box DNA-binding region spans 69–252 (LEMKPLWEEF…SNPFAKGFRE (184 aa)). 2 disordered regions span residues 283–310 (GSAE…NQLL) and 328–359 (QNLY…AGDQ). Positions 293–307 (KASASSSRTPTQPHN) are enriched in polar residues. Positions 331 to 347 (YPGSPSRAGPPRARLAP) are enriched in low complexity.

Its subcellular location is the nucleus. Probable transcriptional regulator involved in developmental processes. The protein is T-box transcription factor TBX10 (Tbx10) of Mus musculus (Mouse).